A 176-amino-acid polypeptide reads, in one-letter code: Cell division protein ZapC (176 aa).

The protein belongs to the ZapC family. Interacts directly with FtsZ.

The protein localises to the cytoplasm. Functionally, contributes to the efficiency of the cell division process by stabilizing the polymeric form of the cell division protein FtsZ. Acts by promoting interactions between FtsZ protofilaments and suppressing the GTPase activity of FtsZ. In Pseudoalteromonas translucida (strain TAC 125), this protein is Cell division protein ZapC.